The chain runs to 265 residues: Polyglutamine-binding protein 1 (265 aa).

The WW domain maps to 46–80; the sequence is EGLPPSWYKVFDPSCGLPYYWNADTDLVSWLSPHD. Serine 94 bears the Phosphoserine mark. The segment at 94–265 is disordered; that stretch reads SSNADAEEKL…AEASRTKQQD (172 aa). Positions 99–175 are enriched in basic and acidic residues; the sequence is AEEKLDRSHD…DKADREEGKE (77 aa). 15 consecutive repeat copies span residues 104-110, 111-117, 118-124, 125-131, 132-138, 139-140, 141-142, 143-144, 150-151, 152-153, 154-155, 156-157, 158-159, 160-161, and 162-163. The tract at residues 104 to 138 is 5 X 7 AA approximate tandem repeats of D-R-[SG]-H-D-K-S; it reads DRSHDKSDRGHDKSDRSHEKPDRGHDKSDRGHDKS. Positions 139 to 144 are 3 X 2 AA tandem repeats of [DE]-R; sequence DRDRER. The 7 X 2 AA tandem repeats of [DE]-R stretch occupies residues 150–163; sequence DRERERDRERDRDR. An important for interaction with TXNL4A region spans residues 245-255; sequence YPSPGAVLRAN. Serine 247 carries the phosphoserine modification.

Interacts with POU3F2/Brn-2, ATXN1, TXNL4A, HTT and AR. Interaction with ATXN1 correlates positively with the length of the polyglutamine tract. Interacts with RNA polymerase II large subunit in a phosphorylation-dependent manner. Forms a ternary complex with ATXN1 mutant and phosphorylated RNA polymerase II. Interacts (via C-terminus) with TXNL4A and CD2BP2. Interacts (via WW domain) with ATN1 and SF3B1, and may interact with additional splice factors. Interacts (via WW domain) with WBP11; Leading to reduce interaction between PQBP1 and TXNL4A. Interacts with CAPRIN1. Interacts with DDX1. Interacts with SFPQ. Interacts with KHSRP.

Its subcellular location is the nucleus. It localises to the nucleus speckle. The protein localises to the cytoplasmic granule. Intrinsically disordered protein that acts as a scaffold, and which is involved in different processes, such as pre-mRNA splicing, transcription regulation, innate immunity and neuron development. Interacts with splicing-related factors via the intrinsically disordered region and regulates alternative splicing of target pre-mRNA species. May suppress the ability of POU3F2 to transactivate the DRD1 gene in a POU3F2 dependent manner. Can activate transcription directly or via association with the transcription machinery. May be involved in ATXN1 mutant-induced cell death. The interaction with ATXN1 mutant reduces levels of phosphorylated RNA polymerase II large subunit. Involved in the assembly of cytoplasmic stress granule, possibly by participating in the transport of neuronal RNA granules. Also acts as an innate immune sensor of infection by retroviruses, by detecting the presence of reverse-transcribed DNA in the cytosol. Directly binds retroviral reverse-transcribed DNA in the cytosol and interacts with CGAS, leading to activate the cGAS-STING signaling pathway, triggering type-I interferon production. The polypeptide is Polyglutamine-binding protein 1 (PQBP1) (Pongo pygmaeus (Bornean orangutan)).